A 430-amino-acid chain; its full sequence is Putrescine 2-hydroxylase (430 aa).

Residues 88–203 (LYVGHQKLVP…LRDCHGLLFE (116 aa)) form the Rieske domain. The [2Fe-2S] cluster site is built by cysteine 128, histidine 130, cysteine 162, and histidine 165.

The protein belongs to the bacterial ring-hydroxylating dioxygenase alpha subunit family. The cofactor is [2Fe-2S] cluster.

Its function is as follows. Rieske-type iron sulfur protein that can catalyze in vitro the 2-hydroxylation of putrescine, forming 2-hydroxyputrescine. May be involved in the biosynthesis of the cyclic hydroxamate siderophore alcaligin. The chain is Putrescine 2-hydroxylase from Bordetella bronchiseptica (strain ATCC BAA-588 / NCTC 13252 / RB50) (Alcaligenes bronchisepticus).